We begin with the raw amino-acid sequence, 652 residues long: Ethylmalonyl-CoA mutase (652 aa).

A B12-binding domain is found at 519–647 (PLKFVVGKPG…MDIVGLVDRT (129 aa)). Histidine 532 contributes to the adenosylcob(III)alamin binding site.

The protein belongs to the methylmalonyl-CoA mutase family. In terms of assembly, homodimer. Requires adenosylcob(III)alamin as cofactor.

The enzyme catalyses (2R)-ethylmalonyl-CoA = (2S)-methylsuccinyl-CoA. Radical enzyme that catalyzes the transformation of (2R)-ethylmalonyl-CoA to (2S)-methylsuccinyl-CoA. Is involved in the ethylmalonyl-CoA pathway for acetyl-CoA assimilation required for R.sphaeroides growth on acetate as sole carbon source. Is highly specific for its substrate, ethylmalonyl-CoA, and accepts methylmalonyl-CoA only at 0.2% relative activity. The protein is Ethylmalonyl-CoA mutase of Cereibacter sphaeroides (strain ATCC 17023 / DSM 158 / JCM 6121 / CCUG 31486 / LMG 2827 / NBRC 12203 / NCIMB 8253 / ATH 2.4.1.) (Rhodobacter sphaeroides).